The following is a 608-amino-acid chain: Auxin response factor 3 (608 aa).

A disordered region spans residues 1–40 (MGGLIDLNVMETEEDETQTQTPSSASGSVSPTSSSSASVS). The segment covering 18–40 (QTQTPSSASGSVSPTSSSSASVS) has biased composition (low complexity). The segment at residues 159 to 261 (FCKTLTASDT…KLRLGVRRAS (103 aa)) is a DNA-binding region (TF-B3).

It belongs to the ARF family. As to quaternary structure, homo and heterodimers. In terms of tissue distribution, expressed in the whole plant.

It is found in the nucleus. Auxin response factors (ARFs) are transcriptional factors that bind specifically to the DNA sequence 5'-TGTCTC-3' found in the auxin-responsive promoter elements (AuxREs). Could act as transcriptional activator or repressor. Formation of heterodimers with Aux/IAA proteins may alter their ability to modulate early auxin response genes expression. Involved in the establishment or elaboration of tissue patterning during gynoecial development. The sequence is that of Auxin response factor 3 (ARF3) from Arabidopsis thaliana (Mouse-ear cress).